The primary structure comprises 177 residues: Large ribosomal subunit protein uL10 (177 aa).

This sequence belongs to the universal ribosomal protein uL10 family. In terms of assembly, part of the ribosomal stalk of the 50S ribosomal subunit. The N-terminus interacts with L11 and the large rRNA to form the base of the stalk. The C-terminus forms an elongated spine to which L12 dimers bind in a sequential fashion forming a multimeric L10(L12)X complex.

In terms of biological role, forms part of the ribosomal stalk, playing a central role in the interaction of the ribosome with GTP-bound translation factors. The sequence is that of Large ribosomal subunit protein uL10 from Legionella pneumophila (strain Corby).